The chain runs to 209 residues: tRNA(Phe) 7-((3-amino-3-carboxypropyl)-4-demethylwyosine(37)-N(4))-methyltransferase (209 aa).

Belongs to the TYW3 family.

It catalyses the reaction 4-demethyl-7-[(3S)-3-amino-3-carboxypropyl]wyosine(37) in tRNA(Phe) + S-adenosyl-L-methionine = 7-[(3S)-3-amino-3-carboxypropyl]wyosine(37) in tRNA(Phe) + S-adenosyl-L-homocysteine + H(+). Its function is as follows. S-adenosyl-L-methionine-dependent methyltransferase that acts as a component of the wyosine derivatives biosynthesis pathway. Probably methylates N-4 position of wybutosine-86 to produce wybutosine-72. The chain is tRNA(Phe) 7-((3-amino-3-carboxypropyl)-4-demethylwyosine(37)-N(4))-methyltransferase from Saccharolobus solfataricus (strain ATCC 35092 / DSM 1617 / JCM 11322 / P2) (Sulfolobus solfataricus).